Here is a 796-residue protein sequence, read N- to C-terminus: MEAGGERFLRQRQVLLLFVFLGGSLAGSESRRYSVAEEKEKGFLIANLAKDLGLRVEELAARGAQVVSKGNKQHFQLSHQTGDLLLNEKLDREELCGPTEPCILHFQILLQNPLQFVTNELRIIDVNDHSPVFFENEMHLKILESTLPGTVIPLGNAEDLDVGRNSLQNYTITPNSHFHVLTRSRRDGRKYPELVLDKALDPEEQPELSLTLTALDGGSPPRSGTAQINIQVLDINDNAPEFAQPLYEVAVLENTPVNSVIVTVSASDLDTGSFGTISYAFFHASEEIRKTFQLNPITGDMQLVKYLNFEAINSYEVDIEAKDGGGLSGKSTVIVQVVDVNDNPPELTLSSVNSPIPENSGETVLAVFSVSDLDSGDNGRVMCSIENNLPFFLKPSVENFYTLVSEGALDRETRSEYNITITITDLGTPRLKTKYNITVLVSDVNDNAPAFTQISYTLFVRENNSPALHIGSVSATDRDSGTNAQVTYSLLPPQDPHLPLSSLVSINADNGHLFALRSLDYEALQAFEFRVGATDRGSPALSSEALVRVLVLDANDNSPFVLYPLQNGSAPCTELVPRAAEPGYLVTKVVAVDGDSGQNAWLSYQLLKATEPGLFGVWAHNGEVRTARLLSERDAAKHRLVVLVKDNGEPPRSATATLHVLLVDGFSQPYLPLPEAAPAQAQADLLTVYLVVALASVSSLFLFSVLLFVAVRLCRRSRAASVGRCSVPEGPFPGQMVDVSGTGTLSQSYQYEVCLTGGSGTNEFKFLKPIIPNFVAQGAERVSEANPSFRKSFEFS.

The signal sequence occupies residues 1-26 (MEAGGERFLRQRQVLLLFVFLGGSLA). The Extracellular portion of the chain corresponds to 27-690 (GSESRRYSVA…AQADLLTVYL (664 aa)). Cadherin domains follow at residues 35–133 (VAEE…SPVF), 138–242 (MHLK…APEF), 247–347 (YEVA…PPEL), 352–451 (VNSP…APAF), and 456–561 (YTLF…SPFV). An N-linked (GlcNAc...) asparagine glycan is attached at N169. 2 N-linked (GlcNAc...) asparagine glycosylation sites follow: N418 and N436. N567 is a glycosylation site (N-linked (GlcNAc...) asparagine). One can recognise a Cadherin 6 domain in the interval 568-671 (GSAPCTELVP…LVDGFSQPYL (104 aa)). A helical membrane pass occupies residues 691-711 (VVALASVSSLFLFSVLLFVAV). Over 712–796 (RLCRRSRAAS…PSFRKSFEFS (85 aa)) the chain is Cytoplasmic.

It localises to the cell membrane. Its function is as follows. Potential calcium-dependent cell-adhesion protein. May be involved in the establishment and maintenance of specific neuronal connections in the brain. The polypeptide is Protocadherin beta-3 (PCDHB3) (Homo sapiens (Human)).